Reading from the N-terminus, the 125-residue chain is Cu-Zn superoxide dismutase-like protein (125 aa).

Cys52 and Cys102 are joined by a disulfide.

The protein belongs to the Cu-Zn superoxide dismutase family.

It localises to the host cytoplasm. Virion protein with no enzymatic activity. This Mus musculus (Mouse) protein is Cu-Zn superoxide dismutase-like protein.